A 361-amino-acid polypeptide reads, in one-letter code: Histidinol-phosphate aminotransferase (361 aa).

An N6-(pyridoxal phosphate)lysine modification is found at lysine 223.

The protein belongs to the class-II pyridoxal-phosphate-dependent aminotransferase family. Histidinol-phosphate aminotransferase subfamily. In terms of assembly, homodimer. Pyridoxal 5'-phosphate is required as a cofactor.

It catalyses the reaction L-histidinol phosphate + 2-oxoglutarate = 3-(imidazol-4-yl)-2-oxopropyl phosphate + L-glutamate. Its pathway is amino-acid biosynthesis; L-histidine biosynthesis; L-histidine from 5-phospho-alpha-D-ribose 1-diphosphate: step 7/9. The protein is Histidinol-phosphate aminotransferase of Deinococcus radiodurans (strain ATCC 13939 / DSM 20539 / JCM 16871 / CCUG 27074 / LMG 4051 / NBRC 15346 / NCIMB 9279 / VKM B-1422 / R1).